A 511-amino-acid chain; its full sequence is 2,3-bisphosphoglycerate-independent phosphoglycerate mutase (511 aa).

D12 contacts Mn(2+). At Y36 the chain carries Phosphotyrosine. S62 is a Mn(2+) binding site. The active-site Phosphoserine intermediate is the S62. Substrate contacts are provided by residues H123, 153–154, R185, R191, 261–264, and K336; these read RD and RPDR. Positions 403, 407, 444, 445, and 462 each coordinate Mn(2+).

This sequence belongs to the BPG-independent phosphoglycerate mutase family. As to quaternary structure, monomer. Requires Mn(2+) as cofactor.

The catalysed reaction is (2R)-2-phosphoglycerate = (2R)-3-phosphoglycerate. It functions in the pathway carbohydrate degradation; glycolysis; pyruvate from D-glyceraldehyde 3-phosphate: step 3/5. Its function is as follows. Essential for rapid growth and for sporulation. Catalyzes the interconversion of 2-phosphoglycerate and 3-phosphoglycerate. The polypeptide is 2,3-bisphosphoglycerate-independent phosphoglycerate mutase (Bacillus licheniformis (strain ATCC 14580 / DSM 13 / JCM 2505 / CCUG 7422 / NBRC 12200 / NCIMB 9375 / NCTC 10341 / NRRL NRS-1264 / Gibson 46)).